The following is a 213-amino-acid chain: ATP phosphoribosyltransferase (213 aa).

Belongs to the ATP phosphoribosyltransferase family. Short subfamily. In terms of assembly, heteromultimer composed of HisG and HisZ subunits.

It localises to the cytoplasm. It catalyses the reaction 1-(5-phospho-beta-D-ribosyl)-ATP + diphosphate = 5-phospho-alpha-D-ribose 1-diphosphate + ATP. The protein operates within amino-acid biosynthesis; L-histidine biosynthesis; L-histidine from 5-phospho-alpha-D-ribose 1-diphosphate: step 1/9. Functionally, catalyzes the condensation of ATP and 5-phosphoribose 1-diphosphate to form N'-(5'-phosphoribosyl)-ATP (PR-ATP). Has a crucial role in the pathway because the rate of histidine biosynthesis seems to be controlled primarily by regulation of HisG enzymatic activity. The polypeptide is ATP phosphoribosyltransferase (Saccharophagus degradans (strain 2-40 / ATCC 43961 / DSM 17024)).